The primary structure comprises 296 residues: Ribosomal RNA small subunit methyltransferase H (296 aa).

Residues 41–43 (GGY), Asp-59, Phe-86, Asp-104, and Gln-111 contribute to the S-adenosyl-L-methionine site.

This sequence belongs to the methyltransferase superfamily. RsmH family.

It is found in the cytoplasm. The enzyme catalyses cytidine(1402) in 16S rRNA + S-adenosyl-L-methionine = N(4)-methylcytidine(1402) in 16S rRNA + S-adenosyl-L-homocysteine + H(+). Its function is as follows. Specifically methylates the N4 position of cytidine in position 1402 (C1402) of 16S rRNA. The protein is Ribosomal RNA small subunit methyltransferase H of Neorickettsia sennetsu (strain ATCC VR-367 / Miyayama) (Ehrlichia sennetsu).